The following is a 490-amino-acid chain: Cruciferin BnC1 (490 aa).

The signal sequence occupies residues 1 to 23; sequence MARLSSLLSFSLALLIFLHGSTA. Intrachain disulfides connect Cys30/Cys63 and Cys106/Cys307. 2 Cupin type-1 domains span residues 35-263 and 313-462; these read LNAL…RTAQ and DNLD…EEAR. Residue Thr109 is modified to Phosphothreonine. Positions 113–164 are disordered; that stretch reads SSVFQPSGGSPSGEGQGQGQQGQGQGHQGQGQGQQGQQGQQGQQSQGQGFRD. Positions 122 to 148 are enriched in gly residues; sequence SPSGEGQGQGQQGQGQGHQGQGQGQQG. Residues 149–161 are compositionally biased toward low complexity; the sequence is QQGQQGQQSQGQG. Tyr330 bears the Phosphotyrosine mark. Ser332 is subject to Phosphoserine. Thr426 bears the Phosphothreonine mark.

This sequence belongs to the 11S seed storage protein (globulins) family. In terms of assembly, hexamer; each subunit is composed of an acidic and a basic chain derived from a single precursor and linked by a disulfide bond.

In terms of biological role, this is a seed storage protein. The protein is Cruciferin BnC1 (BnC1) of Brassica napus (Rape).